The following is a 306-amino-acid chain: Recombination-associated protein RdgC (306 aa).

This sequence belongs to the RdgC family.

The protein resides in the cytoplasm. It localises to the nucleoid. Its function is as follows. May be involved in recombination. In Pseudomonas aeruginosa (strain ATCC 15692 / DSM 22644 / CIP 104116 / JCM 14847 / LMG 12228 / 1C / PRS 101 / PAO1), this protein is Recombination-associated protein RdgC.